The primary structure comprises 366 residues: Leucine-rich repeat-containing protein 58 (366 aa).

Ser-19 is modified (phosphoserine). LRR repeat units follow at residues 40–61, 64–86, 87–108, 116–138, 139–161, 162–184, 185–206, 208–229, and 231–251; these read ALLR…LGGG, HLQL…LTLS, GLRT…PKGL, SLQV…LELR, ALQT…ENLR, SLEC…ANLP, SLNY…LSQL, SLRS…ILNL, and HLEE…RDLT. A compositionally biased stretch (low complexity) spans 337–346; that stretch reads ASHSSTSQSE. A disordered region spans residues 337–356; sequence ASHSSTSQSESDSEDEASVA.

The chain is Leucine-rich repeat-containing protein 58 (Lrrc58) from Mus musculus (Mouse).